A 270-amino-acid polypeptide reads, in one-letter code: Oxidoreductase NAD-binding domain-containing protein 1 (270 aa).

One can recognise an FAD-binding FR-type domain in the interval 20 to 123 (MELFSARVCD…VGGNFYFDPQ (104 aa)). NAD(+) is bound at residue 137 to 142 (GVGINP).

This is Oxidoreductase NAD-binding domain-containing protein 1 (oxnad1) from Danio rerio (Zebrafish).